Here is a 75-residue protein sequence, read N- to C-terminus: Cruzioseptin-6 (75 aa).

A signal peptide spans 1 to 22 (MAYLKKSLFLVLFLGLVSLSIC). Residues 23–43 (EEEKREEENEEEQEDDDQSEE) constitute a propeptide that is removed on maturation. Residues 24–44 (EEKREEENEEEQEDDDQSEEK) are disordered. The span at 30-41 (ENEEEQEDDDQS) shows a compositional bias: acidic residues.

Expressed by the skin glands.

It is found in the secreted. Its function is as follows. Has antimicrobial activity. The sequence is that of Cruzioseptin-6 from Cruziohyla calcarifer (Splendid leaf frog).